The sequence spans 328 residues: DNA-directed RNA polymerase subunit alpha (328 aa).

The alpha N-terminal domain (alpha-NTD) stretch occupies residues 1–234; that stretch reads MQGSVTEFLK…EQLDAFVDLR (234 aa). Residues 248–328 form an alpha C-terminal domain (alpha-CTD) region; that stretch reads FDPILLRPVD…NWPPASIAED (81 aa).

This sequence belongs to the RNA polymerase alpha chain family. Homodimer. The RNAP catalytic core consists of 2 alpha, 1 beta, 1 beta' and 1 omega subunit. When a sigma factor is associated with the core the holoenzyme is formed, which can initiate transcription.

It carries out the reaction RNA(n) + a ribonucleoside 5'-triphosphate = RNA(n+1) + diphosphate. DNA-dependent RNA polymerase catalyzes the transcription of DNA into RNA using the four ribonucleoside triphosphates as substrates. The polypeptide is DNA-directed RNA polymerase subunit alpha (Haemophilus influenzae (strain PittEE)).